The primary structure comprises 326 residues: Balbiani ring protein 1 (326 aa).

The span at 1 to 33 shows a compositional bias: low complexity; that stretch reads PSKSGPRPSKSGPRPSKSGPRPSKSGPRPSKSG. The disordered stretch occupies residues 1 to 119; the sequence is PSKSGPRPSK…RESPVCDDAM (119 aa). The segment covering 34–51 has biased composition (basic and acidic residues); it reads PRPEKCGSAMRKAEAEKC. Positions 93–102 are enriched in low complexity; the sequence is VTPTPEVPTT. Residues 107–119 are compositionally biased toward basic and acidic residues; the sequence is SESRESPVCDDAM.

As to expression, salivary gland.

The protein localises to the secreted. Its function is as follows. Used by the larvae to construct a supramolecular structure, the larval tube. In Chironomus pallidivittatus (Midge), this protein is Balbiani ring protein 1 (BR1).